A 718-amino-acid polypeptide reads, in one-letter code: Ribosomal RNA large subunit methyltransferase K/L (718 aa).

One can recognise a THUMP domain in the interval 44 to 155; that stretch reads DAYKVCIYSY…KQFVNVFLCL (112 aa).

The protein belongs to the methyltransferase superfamily. RlmKL family.

It localises to the cytoplasm. The catalysed reaction is guanosine(2445) in 23S rRNA + S-adenosyl-L-methionine = N(2)-methylguanosine(2445) in 23S rRNA + S-adenosyl-L-homocysteine + H(+). It catalyses the reaction guanosine(2069) in 23S rRNA + S-adenosyl-L-methionine = N(2)-methylguanosine(2069) in 23S rRNA + S-adenosyl-L-homocysteine + H(+). Its function is as follows. Specifically methylates the guanine in position 2445 (m2G2445) and the guanine in position 2069 (m7G2069) of 23S rRNA. This chain is Ribosomal RNA large subunit methyltransferase K/L, found in Francisella tularensis subsp. novicida (strain U112).